A 288-amino-acid chain; its full sequence is ATP phosphoribosyltransferase (288 aa).

It belongs to the ATP phosphoribosyltransferase family. Long subfamily. Mg(2+) is required as a cofactor.

Its subcellular location is the cytoplasm. It catalyses the reaction 1-(5-phospho-beta-D-ribosyl)-ATP + diphosphate = 5-phospho-alpha-D-ribose 1-diphosphate + ATP. The protein operates within amino-acid biosynthesis; L-histidine biosynthesis; L-histidine from 5-phospho-alpha-D-ribose 1-diphosphate: step 1/9. Feedback inhibited by histidine. Functionally, catalyzes the condensation of ATP and 5-phosphoribose 1-diphosphate to form N'-(5'-phosphoribosyl)-ATP (PR-ATP). Has a crucial role in the pathway because the rate of histidine biosynthesis seems to be controlled primarily by regulation of HisG enzymatic activity. In Methanocaldococcus jannaschii (strain ATCC 43067 / DSM 2661 / JAL-1 / JCM 10045 / NBRC 100440) (Methanococcus jannaschii), this protein is ATP phosphoribosyltransferase (hisG).